Here is a 602-residue protein sequence, read N- to C-terminus: MATPCIQNAFRRKTLPVRIGDLFVGSEHSIKIQSMTTTATTDVDGTVRQICALQEWGCDIVRVTVQGLREVHACEHIKDRLIQQNISIPLVADIHFFPQAAIHVVDCVDKVRINPGNYVDKRNMFTGKIYSDEQYAHSLEHLMNKFSPLVEKCKRLGKAMRIGVNHGSLSERVTQRYGNTIEGMVYSALEYAEVCVAMDYHDVIFSMKSSNPKVMVAAYRSLAYELDQREWSYPLHLGVTEAGSGTAGIVKSAVGIGTLLSEGLGDTIRCSLTGSPINEIPICIDLLKQTTELSERWGEADNPFAIHSSKQLGTRNTLNTPPWGNVYGLLINLTDVQLLTAEPIELLQCLGIDTTTGKIDPTTPEGVVVPKAMRSSPIVSEIEKHLLVFNKEDVPILNPMNEEEWLSEETLSAPFVYFEVTDIHTARRFFSLRQHSTQPVCLSFSLDPHLSKNEAIIDLSARLGALLLDGLGSCVLLDFVDIKLSRTLGFLILQSANIRSVTVEYVSCPGCGRTLFDLLAVSQRIRERTQHLPGGLKIAVMGCIVNGPGEMADADFGYVGSKPGMIDLYVKHKCVKSCIPIENAEEELVQLLKEHGVWKEPE.

Residues Cys-508, Cys-511, Cys-543, and Glu-550 each contribute to the [4Fe-4S] cluster site.

This sequence belongs to the IspG family. [4Fe-4S] cluster serves as cofactor.

It carries out the reaction (2E)-4-hydroxy-3-methylbut-2-enyl diphosphate + oxidized [flavodoxin] + H2O + 2 H(+) = 2-C-methyl-D-erythritol 2,4-cyclic diphosphate + reduced [flavodoxin]. It participates in isoprenoid biosynthesis; isopentenyl diphosphate biosynthesis via DXP pathway; isopentenyl diphosphate from 1-deoxy-D-xylulose 5-phosphate: step 5/6. Its function is as follows. Converts 2C-methyl-D-erythritol 2,4-cyclodiphosphate (ME-2,4cPP) into 1-hydroxy-2-methyl-2-(E)-butenyl 4-diphosphate. This Chlamydia trachomatis serovar D (strain ATCC VR-885 / DSM 19411 / UW-3/Cx) protein is 4-hydroxy-3-methylbut-2-en-1-yl diphosphate synthase (flavodoxin).